Here is a 302-residue protein sequence, read N- to C-terminus: Oligopeptide transport system permease protein OppC (302 aa).

Residues 1–39 (MMLSKKNSETLENFSEKLEVEGRSLWQDARRRFMHNRAA) are Cytoplasmic-facing. A helical transmembrane segment spans residues 40–62 (VASLIVLFLIALFVTVAPMLSQF). At 63–102 (TYFDTDWGMMSSAPDMASGHYFGTDSSGRDLLVRVAIGGR) the chain is on the periplasmic side. The 190-residue stretch at 101 to 290 (GRISLMVGIA…VTLFCFNFIG (190 aa)) folds into the ABC transmembrane type-1 domain. The chain crosses the membrane as a helical span at residues 103–125 (ISLMVGIAAALVAVIVGTLYGSL). Over 126 to 137 (SGYLGGKIDSVM) the chain is Cytoplasmic. Residues 138 to 160 (MRLLEILNSFPFMFFVILLVTFF) traverse the membrane as a helical segment. The Periplasmic portion of the chain corresponds to 161-163 (GQN). The chain crosses the membrane as a helical span at residues 164–183 (ILLIFVAIGMVSWLDMARIV). Over 184-213 (RGQTLSLKRKEFIEAAQVGGVSTASIVIRH) the chain is Cytoplasmic. A helical transmembrane segment spans residues 214–236 (IVPNVLGVVVVYASLLVPSMILF). Over 237–267 (ESFLSFLGLGTQEPLSSWGALLSDGANSMEV) the chain is Periplasmic. A helical membrane pass occupies residues 268 to 290 (SPWLLLFPAGFLVVTLFCFNFIG). At 291 to 302 (DGLRDALDPKDR) the chain is on the cytoplasmic side.

The protein belongs to the binding-protein-dependent transport system permease family. OppBC subfamily. The complex is composed of two ATP-binding proteins (OppD and OppF), two transmembrane proteins (OppB and OppC) and a solute-binding protein (OppA).

The protein localises to the cell inner membrane. Part of the ABC transporter complex OppABCDF involved in the uptake of oligopeptides, including the cell wall murein tripeptide L-alanyl-gamma-D-glutamyl-meso-diaminopimelate. Responsible for the translocation of the substrate across the membrane. Plays an important nutritional role and is involved in the recycling of cell wall peptides. This is Oligopeptide transport system permease protein OppC from Salmonella typhimurium (strain LT2 / SGSC1412 / ATCC 700720).